A 140-amino-acid polypeptide reads, in one-letter code: Nucleoside diphosphate kinase (140 aa).

Residues lysine 11, phenylalanine 59, arginine 87, threonine 93, arginine 104, and asparagine 114 each coordinate ATP. The Pros-phosphohistidine intermediate role is filled by histidine 117.

It belongs to the NDK family. Homotetramer. Mg(2+) is required as a cofactor.

It localises to the cytoplasm. The catalysed reaction is a 2'-deoxyribonucleoside 5'-diphosphate + ATP = a 2'-deoxyribonucleoside 5'-triphosphate + ADP. It catalyses the reaction a ribonucleoside 5'-diphosphate + ATP = a ribonucleoside 5'-triphosphate + ADP. Functionally, major role in the synthesis of nucleoside triphosphates other than ATP. The ATP gamma phosphate is transferred to the NDP beta phosphate via a ping-pong mechanism, using a phosphorylated active-site intermediate. This is Nucleoside diphosphate kinase from Brucella anthropi (strain ATCC 49188 / DSM 6882 / CCUG 24695 / JCM 21032 / LMG 3331 / NBRC 15819 / NCTC 12168 / Alc 37) (Ochrobactrum anthropi).